Here is a 129-residue protein sequence, read N- to C-terminus: UPF0102 protein Ctha_1382 (129 aa).

It belongs to the UPF0102 family.

This is UPF0102 protein Ctha_1382 from Chloroherpeton thalassium (strain ATCC 35110 / GB-78).